Consider the following 417-residue polypeptide: Serine hydroxymethyltransferase (417 aa).

(6S)-5,6,7,8-tetrahydrofolate is bound by residues Leu121 and 125–127 (GHL). Position 229 is an N6-(pyridoxal phosphate)lysine (Lys229). Position 355 to 357 (355 to 357 (SPF)) interacts with (6S)-5,6,7,8-tetrahydrofolate.

This sequence belongs to the SHMT family. As to quaternary structure, homodimer. Pyridoxal 5'-phosphate is required as a cofactor.

It localises to the cytoplasm. It catalyses the reaction (6R)-5,10-methylene-5,6,7,8-tetrahydrofolate + glycine + H2O = (6S)-5,6,7,8-tetrahydrofolate + L-serine. Its pathway is one-carbon metabolism; tetrahydrofolate interconversion. It participates in amino-acid biosynthesis; glycine biosynthesis; glycine from L-serine: step 1/1. Functionally, catalyzes the reversible interconversion of serine and glycine with tetrahydrofolate (THF) serving as the one-carbon carrier. This reaction serves as the major source of one-carbon groups required for the biosynthesis of purines, thymidylate, methionine, and other important biomolecules. Also exhibits THF-independent aldolase activity toward beta-hydroxyamino acids, producing glycine and aldehydes, via a retro-aldol mechanism. In Shewanella frigidimarina (strain NCIMB 400), this protein is Serine hydroxymethyltransferase.